Consider the following 1431-residue polypeptide: Collagen alpha-1(XVII) chain (1431 aa).

The Cytoplasmic portion of the chain corresponds to 1 to 468 (MDVTKKNKRD…AWCPCGSCCS (468 aa)). Positions 1–569 (MDVTKKNKRD…MTEQENGNLR (569 aa)) are nonhelical region (NC16). Disordered stretches follow at residues 25 to 155 (TRLT…PSTR), 167 to 188 (KGSRSASASPTRNTSSTLPIPK), 304 to 324 (TAYGVKKNVPQPPTVTSTGVS), and 422 to 449 (SVENHNYDRGGGSGGGARGGGGSGGGGG). The span at 60-74 (GSSGYINSSGSIRGN) shows a compositional bias: low complexity. Composition is skewed to polar residues over residues 75–96 (ASTSSYRRAHSPASTLPNSPGS), 111–120 (EGSSSGNSSP), and 170–184 (RSASASPTRNTSSTL). The tract at residues 146–231 (RLQSASPSTR…WSSTLPAGSS (86 aa)) is necessary for interaction with DST and for the recruitment of DST to hemidesmosome. A compositionally biased stretch (gly residues) spans 430–449 (RGGGSGGGARGGGGSGGGGG). Residues 469-489 (WWKWLLGLLLTWLLLLGLLFG) form a helical; Signal-anchor for type II membrane protein membrane-spanning segment. The Extracellular segment spans residues 490–1431 (LIALAEEVRK…RRRRSIAIKP (942 aa)). Ser-547 bears the Phosphoserine; by CK2 mark. Disordered regions lie at residues 564–869 (ENGN…SFIS), 884–996 (DLRG…SSSG), 1158–1178 (DIIGPPGPPGPPGPRGPPGVS), and 1208–1249 (FIIG…SSSV). Positions 570–1417 (GNPGPKGDMG…KGDKGDKGDQ (848 aa)) are triple-helical region. Composition is skewed to low complexity over residues 657-673 (PRGLPGVPGSVGPRGPN), 738-751 (EPGAKGAMGPAGPD), and 778-799 (PGKPGVTGPQGPQGLPGSPGRP). Pro residues-rich tracts occupy residues 823-844 (PGPPGPPGAMGPPGPSGTPGPA), 889-911 (LGPPGPRGPPGPSIPGPPGPRGP), 937-946 (PPGPPGPPGP), 979-989 (PPGPPGPPGPP), 1162-1174 (PPGPPGPPGPRGP), and 1212-1221 (PPGPPGPQGP). An N-linked (GlcNAc...) asparagine glycan is attached at Asn-1230. Polar residues predominate over residues 1232 to 1249 (SWGSSSSARRGTAYSSSV). Asn-1356 is a glycosylation site (N-linked (GlcNAc...) asparagine). Residues 1366 to 1431 (RTHGAIPGPP…RRRRSIAIKP (66 aa)) form a disordered region. The span at 1407-1416 (QKGDKGDKGD) shows a compositional bias: basic and acidic residues. The interval 1418 to 1431 (VYTGRRRRSIAIKP) is nonhelical region (NC1). The segment covering 1421-1431 (GRRRRSIAIKP) has biased composition (basic residues).

In terms of assembly, homotrimers of alpha 1(XVII)chains. Interacts (via cytoplasmic region) with ITGB4 (via cytoplasmic region). Interacts (via cytoplasmic region) with DST (via N-terminus). Interacts (via N-terminus) with PLEC. Interacts (via cytoplasmic region) with DSP. Post-translationally, the intracellular/endo domain is disulfide-linked. Prolines at the third position of the tripeptide repeating unit (G-X-Y) are hydroxylated in some or all of the chains. In terms of processing, the ectodomain is shedded from the surface of keratinocytes resulting in a 120-kDa soluble form, also named as 120 kDa linear IgA disease antigen homolog. The shedding is mediated by membrane-bound metalloproteases. This cleavage is inhibited by phosphorylation at Ser-547.

Its subcellular location is the cell junction. The protein localises to the hemidesmosome. The protein resides in the membrane. It localises to the secreted. It is found in the extracellular space. Its subcellular location is the extracellular matrix. The protein localises to the basement membrane. Its function is as follows. May play a role in the integrity of hemidesmosome and the attachment of basal keratinocytes to the underlying basement membrane. Functionally, the 120 kDa linear IgA disease antigen homolog is an anchoring filament component involved in dermal-epidermal cohesion. This chain is Collagen alpha-1(XVII) chain (COL17A1), found in Mesocricetus auratus (Golden hamster).